A 204-amino-acid polypeptide reads, in one-letter code: MAVVIKFFRWIWQKISRWVFFWKHKAKSVIMDHTDSKKNELKAEKAFKVSETFKLVEPPKEAKVSKMDVSPKVVDPCLLAKTTMDGAAVEAGRRRRSLLKLPQAAVKSVSMLMASALQSGWQMCSWKSSVSSTSVASQMKTRSPLESREAAMLREVYLVLWAIRKQLRQVARRQERRRRHHLRAHMGPQPDPAQGLKQDARSPL.

Residue Ser-65 is modified to Phosphoserine. The segment covering Arg-172–Ala-184 has biased composition (basic residues). The interval Arg-172 to Leu-204 is disordered.

The protein resides in the cytoplasmic vesicle. Its subcellular location is the secretory vesicle. The protein localises to the acrosome. In terms of biological role, may play an important role in acrosome formation and nucleus shaping during spermiogenesis. The protein is Sperm acrosome developmental regulator (SPACDR) of Bos taurus (Bovine).